The chain runs to 186 residues: Mitochondrial import inner membrane translocase subunit Tim22 (186 aa).

Cystine bridges form between Cys61–Cys133 and Cys152–Cys171. The next 3 helical transmembrane spans lie at 66–86, 117–135, and 162–182; these read ALAC…TAGI, YAKN…ECLV, and AGLK…AVID.

The protein belongs to the Tim17/Tim22/Tim23 family. In terms of assembly, core component of the TIM22 complex.

The protein localises to the mitochondrion inner membrane. Its function is as follows. Essential core component of the TIM22 complex, a complex that mediates the import and insertion of multi-pass transmembrane proteins into the mitochondrial inner membrane. In the TIM22 complex, it constitutes the voltage-activated and signal-gated channel. Forms a twin-pore translocase that uses the membrane potential as external driving force in 2 voltage-dependent steps. The sequence is that of Mitochondrial import inner membrane translocase subunit Tim22 (timm22) from Xenopus tropicalis (Western clawed frog).